The chain runs to 492 residues: Catalase (492 aa).

Residues H65 and N138 contribute to the active site. Y348 provides a ligand contact to heme.

It belongs to the catalase family. Homotetramer. The cofactor is heme.

The protein localises to the cytoplasm. It is found in the cytosol. The protein resides in the peroxisome matrix. It catalyses the reaction 2 H2O2 = O2 + 2 H2O. In terms of biological role, catalyzes the degradation of hydrogen peroxide (H(2)O(2)) generated by peroxisomal oxidases to water and oxygen, thereby protecting cells from the toxic effects of hydrogen peroxide. The polypeptide is Catalase (Vigna radiata var. radiata (Mung bean)).